The following is a 396-amino-acid chain: Phosphoglycerate kinase (396 aa).

Substrate is bound by residues 19–21 (DFN), arginine 35, 58–61 (HLGR), arginine 117, and arginine 150. Residues lysine 201, glutamate 323, and 349-352 (GGDT) each bind ATP.

The protein belongs to the phosphoglycerate kinase family. In terms of assembly, monomer.

The protein localises to the cytoplasm. It catalyses the reaction (2R)-3-phosphoglycerate + ATP = (2R)-3-phospho-glyceroyl phosphate + ADP. It participates in carbohydrate degradation; glycolysis; pyruvate from D-glyceraldehyde 3-phosphate: step 2/5. The sequence is that of Phosphoglycerate kinase from Desulfosudis oleivorans (strain DSM 6200 / JCM 39069 / Hxd3) (Desulfococcus oleovorans).